A 279-amino-acid polypeptide reads, in one-letter code: Glutamate racemase (279 aa).

Substrate is bound by residues 13 to 14 (DS) and 45 to 46 (YG). C76 (proton donor/acceptor) is an active-site residue. Substrate is bound at residue 77–78 (NT). C185 acts as the Proton donor/acceptor in catalysis. 186–187 (TH) is a substrate binding site.

The protein belongs to the aspartate/glutamate racemases family.

It catalyses the reaction L-glutamate = D-glutamate. The protein operates within cell wall biogenesis; peptidoglycan biosynthesis. Provides the (R)-glutamate required for cell wall biosynthesis. This chain is Glutamate racemase, found in Picosynechococcus sp. (strain ATCC 27264 / PCC 7002 / PR-6) (Agmenellum quadruplicatum).